The chain runs to 620 residues: Threonine--tRNA ligase (620 aa).

Residues 1–42 (MFEIAKGISNSLAKKSVGAKVDGKNVDMSYILDHDAEVEFID) enclose the TGS domain. The segment at 224 to 515 (DHRKLGKELE…LIEHYAGAFP (292 aa)) is catalytic. Positions 315, 366, and 492 each coordinate Zn(2+).

It belongs to the class-II aminoacyl-tRNA synthetase family. Homodimer. Zn(2+) is required as a cofactor.

Its subcellular location is the cytoplasm. The catalysed reaction is tRNA(Thr) + L-threonine + ATP = L-threonyl-tRNA(Thr) + AMP + diphosphate + H(+). Its function is as follows. Catalyzes the attachment of threonine to tRNA(Thr) in a two-step reaction: L-threonine is first activated by ATP to form Thr-AMP and then transferred to the acceptor end of tRNA(Thr). Also edits incorrectly charged L-seryl-tRNA(Thr). In Fusobacterium nucleatum subsp. nucleatum (strain ATCC 25586 / DSM 15643 / BCRC 10681 / CIP 101130 / JCM 8532 / KCTC 2640 / LMG 13131 / VPI 4355), this protein is Threonine--tRNA ligase.